The following is a 67-amino-acid chain: Alpha-conotoxin G1.5 (67 aa).

The signal sequence occupies residues 1–21 (MGMRMMFTVFLLVALATTVVS). A propeptide spanning residues 22-47 (FTSDRASDRRNAAVKAFDLISSTVKK) is cleaved from the precursor. 2 disulfides stabilise this stretch: Cys-49–Cys-55 and Cys-50–Cys-63. Gln-65 carries the glutamine amide modification.

The protein belongs to the conotoxin A superfamily. Expressed by the venom duct.

The protein resides in the secreted. Alpha-conotoxins act on postsynaptic membranes, they bind to the nicotinic acetylcholine receptors (nAChR) and thus inhibit them. Globular isomer (C1-C3; C2-C4) selectively inhibits neuronal (non-muscle) nAChR subtypes particularly human alpha-3-beta-2/CHRNA3-CHRNB2 (IC(50)=35.7 nM) and alpha-9-alpha-10/CHRNA9-CHRNA10 nAChRs (IC(50)=569 nM), while the ribbon isomer (C1-C4; C2-C3) shows weak inhibition on alpha-3-beta-2/CHRNA3-CHRNB2, but not on all other receptors tested. The chain is Alpha-conotoxin G1.5 from Conus geographus (Geography cone).